Reading from the N-terminus, the 662-residue chain is Glycogen debranching enzyme (662 aa).

Residue aspartate 338 is the Nucleophile of the active site. The Proton donor role is filled by glutamate 373.

It belongs to the glycosyl hydrolase 13 family.

The catalysed reaction is Hydrolysis of (1-&gt;6)-alpha-D-glucosidic linkages to branches with degrees of polymerization of three or four glucose residues in limit dextrin.. It functions in the pathway glycan degradation; glycogen degradation. Its function is as follows. Removes maltotriose and maltotetraose chains that are attached by 1,6-alpha-linkage to the limit dextrin main chain, generating a debranched limit dextrin. This Yersinia pestis protein is Glycogen debranching enzyme.